The chain runs to 211 residues: Protein-L-isoaspartate O-methyltransferase (211 aa).

S62 is a catalytic residue.

It belongs to the methyltransferase superfamily. L-isoaspartyl/D-aspartyl protein methyltransferase family.

It is found in the cytoplasm. It catalyses the reaction [protein]-L-isoaspartate + S-adenosyl-L-methionine = [protein]-L-isoaspartate alpha-methyl ester + S-adenosyl-L-homocysteine. Catalyzes the methyl esterification of L-isoaspartyl residues in peptides and proteins that result from spontaneous decomposition of normal L-aspartyl and L-asparaginyl residues. It plays a role in the repair and/or degradation of damaged proteins. This Shewanella baltica (strain OS195) protein is Protein-L-isoaspartate O-methyltransferase.